Consider the following 321-residue polypeptide: Sideroflexin-3 (321 aa).

Position 1 is an N-acetylmethionine (M1). Helical transmembrane passes span L146 to L164, L174 to L194, I225 to V245, and L266 to F286.

The protein belongs to the sideroflexin family.

It is found in the mitochondrion membrane. It carries out the reaction L-serine(in) = L-serine(out). In terms of biological role, mitochondrial serine transporter that mediates transport of serine into mitochondria, an important step of the one-carbon metabolism pathway. Mitochondrial serine is converted to glycine and formate, which then exits to the cytosol where it is used to generate the charged folates that serve as one-carbon donors. The polypeptide is Sideroflexin-3 (Sfxn3) (Rattus norvegicus (Rat)).